We begin with the raw amino-acid sequence, 792 residues long: Zinc finger CCCH domain-containing protein 11A (792 aa).

C3H1-type zinc fingers lie at residues 2-29 (PNQG…HCEA), 31-57 (LGNE…HMEI), and 60-87 (KRSE…HTRS). Disordered regions lie at residues 103–191 (PTVP…VHNG), 223–331 (KKMK…KAGE), and 345–443 (ASQK…RSMQ). At serine 108 the chain carries Phosphoserine. Glycyl lysine isopeptide (Lys-Gly) (interchain with G-Cter in SUMO2) cross-links involve residues lysine 114 and lysine 124. Polar residues predominate over residues 115–135 (TSQLTVQQSKLSVQSNPSPQL). The residue at position 132 (serine 132) is a Phosphoserine. Lysine 140 participates in a covalent cross-link: Glycyl lysine isopeptide (Lys-Gly) (interchain with G-Cter in SUMO2). Residues serine 149, serine 171, and serine 289 each carry the phosphoserine modification. The span at 160-175 (ADDDEDDDDQFSEEGD) shows a compositional bias: acidic residues. Composition is skewed to basic and acidic residues over residues 308–331 (KKVE…KAGE) and 345–360 (ASQK…KAEE). Residues 338–360 (EEILLERASQKRGELQTKLKAEE) are a coiled coil. Phosphoserine is present on serine 346. Positions 367-376 (SPSGTKSSSS) are enriched in low complexity. Basic and acidic residues-rich tracts occupy residues 393–405 (QQEM…KKDT) and 431–443 (QPEE…RSMQ). Lysine 454 is covalently cross-linked (Glycyl lysine isopeptide (Lys-Gly) (interchain with G-Cter in SUMO2)). Disordered stretches follow at residues 458–531 (ALRV…PTKL) and 545–571 (QRLQ…ASSY). A compositionally biased stretch (polar residues) spans 461-473 (VQQSSESSGNSRP). 2 stretches are compositionally biased toward basic and acidic residues: residues 492–501 (GVKEEKKCGL) and 545–558 (QRLQ…KEKA). Lysine 601 participates in a covalent cross-link: Glycyl lysine isopeptide (Lys-Gly) (interchain with G-Cter in SUMO2). The disordered stretch occupies residues 690-750 (LSEDKPVTMS…SASTGKPPLS (61 aa)). Residues 698 to 715 (MSETENPKDSSVLSSAQA) show a composition bias toward polar residues. Residues 717–730 (SEPLLPEGSGPSSS) show a composition bias toward low complexity.

As to quaternary structure, interacts with TREX complex components THOC2, DDX39 and POLDIP3; the interactions are ATP-dependent. Interacts with PABPN1; this interaction retains ZC3H11A in nuclear speckles. Interacts with KPNA3.

Its subcellular location is the nucleus speckle. Functionally, through its association with TREX complex components, may participate in the export and post-transcriptional coordination of selected mRNA transcripts, including those required to maintain the metabolic processes in embryonic cells. Binds RNA. This chain is Zinc finger CCCH domain-containing protein 11A (Zc3h11a), found in Mus musculus (Mouse).